The sequence spans 35 residues: Photosystem II reaction center protein T (35 aa).

The chain crosses the membrane as a helical span at residues 3–23 (ALVYTFLLVGTLGIIFFAIFF).

Belongs to the PsbT family. As to quaternary structure, PSII is composed of 1 copy each of membrane proteins PsbA, PsbB, PsbC, PsbD, PsbE, PsbF, PsbH, PsbI, PsbJ, PsbK, PsbL, PsbM, PsbT, PsbY, PsbZ, Psb30/Ycf12, at least 3 peripheral proteins of the oxygen-evolving complex and a large number of cofactors. It forms dimeric complexes.

The protein resides in the plastid. The protein localises to the chloroplast thylakoid membrane. Its function is as follows. Found at the monomer-monomer interface of the photosystem II (PS II) dimer, plays a role in assembly and dimerization of PSII. PSII is a light-driven water plastoquinone oxidoreductase, using light energy to abstract electrons from H(2)O, generating a proton gradient subsequently used for ATP formation. The polypeptide is Photosystem II reaction center protein T (Chara vulgaris (Common stonewort)).